The primary structure comprises 143 residues: Transcriptional regulator MraZ (143 aa).

2 consecutive SpoVT-AbrB domains span residues 5-47 and 76-119; these read EYEH…TLEE and AIEV…DRET.

The protein belongs to the MraZ family. In terms of assembly, forms oligomers.

The protein localises to the cytoplasm. The protein resides in the nucleoid. In Staphylococcus haemolyticus (strain JCSC1435), this protein is Transcriptional regulator MraZ.